The primary structure comprises 133 residues: Type III secretion protein HrcQb (133 aa).

Residues 1-21 are compositionally biased toward acidic residues; sequence MSTEDLYQDDVEMLDDYEEPV. Residues 1–60 form a disordered region; it reads MSTEDLYQDDVEMLDDYEEPVPEQADQQQRDDEYAEHAFGYADSDAEHEEQSGDHHESPM. Over residues 49 to 59 the composition is skewed to basic and acidic residues; that stretch reads EEQSGDHHESP.

The protein belongs to the FliN/MopA/SpaO family. In terms of assembly, homotetramer. The four monomers assemble into two tightly bound homodimers. Interacts with HrcQa.

The protein resides in the cytoplasm. Component of the type III secretion system, which is required for effector protein delivery, parasitism, and pathogenicity. Probably participates in the formation of a C-ring-like assembly along with HrcQa. This is Type III secretion protein HrcQb (hrcQb) from Pseudomonas syringae pv. syringae.